The following is a 238-amino-acid chain: 14-3-3 family protein artA (238 aa).

It belongs to the 14-3-3 family.

14-3-3 family protein that plays a role in the morphological differentiation and secondary metabolism biosynthesis. Required for normal fungal morphogenesis in an environment-dependent manner, affecting the balance between production of conidiophores and the formation of sclerotia, resistant structures that are necessary for the dissemination and survival. Acts as a positive regulator of conidiation and a negative regulator of sclerotial production. Also regulates the production of secondary metabolites such as aflatoxin, but also the indole-tetramic acid mycotoxin cyclopiazonic acid (CPA) and ustiloxin, an inhibitor of microtubule assembly. This Aspergillus flavus (strain ATCC 200026 / FGSC A1120 / IAM 13836 / NRRL 3357 / JCM 12722 / SRRC 167) protein is 14-3-3 family protein artA.